The sequence spans 364 residues: B3 domain-containing protein At5g38490 (364 aa).

The interval 148–202 (ASTSSSSLLNLPCLEPSTETKDVPNPNYQSSSPSSCLTGKTNRKRRAVEQRKSGK) is disordered. The segment at residues 260-364 (FQKLIRNDFL…GVLCFALDTE (105 aa)) is a DNA-binding region (TF-B3).

The protein resides in the nucleus. The chain is B3 domain-containing protein At5g38490 from Arabidopsis thaliana (Mouse-ear cress).